An 81-amino-acid chain; its full sequence is Small ribosomal subunit protein bS20 (81 aa).

This sequence belongs to the bacterial ribosomal protein bS20 family.

In terms of biological role, binds directly to 16S ribosomal RNA. This chain is Small ribosomal subunit protein bS20, found in Mycoplasma mycoides subsp. mycoides SC (strain CCUG 32753 / NCTC 10114 / PG1).